Reading from the N-terminus, the 410-residue chain is Gamma-glutamyl phosphate reductase (410 aa).

The protein belongs to the gamma-glutamyl phosphate reductase family.

It localises to the cytoplasm. The enzyme catalyses L-glutamate 5-semialdehyde + phosphate + NADP(+) = L-glutamyl 5-phosphate + NADPH + H(+). It functions in the pathway amino-acid biosynthesis; L-proline biosynthesis; L-glutamate 5-semialdehyde from L-glutamate: step 2/2. In terms of biological role, catalyzes the NADPH-dependent reduction of L-glutamate 5-phosphate into L-glutamate 5-semialdehyde and phosphate. The product spontaneously undergoes cyclization to form 1-pyrroline-5-carboxylate. The polypeptide is Gamma-glutamyl phosphate reductase (Campylobacter jejuni subsp. jejuni serotype O:2 (strain ATCC 700819 / NCTC 11168)).